The primary structure comprises 267 residues: Shikimate dehydrogenase (NADP(+)) (267 aa).

Shikimate contacts are provided by residues serine 14–serine 16 and threonine 61. Catalysis depends on lysine 65, which acts as the Proton acceptor. Residues asparagine 86 and aspartate 101 each contribute to the shikimate site. Residues glycine 126–alanine 130, asparagine 150–lysine 155, and leucine 213 each bind NADP(+). A shikimate-binding site is contributed by tyrosine 215. NADP(+) is bound at residue glycine 236.

The protein belongs to the shikimate dehydrogenase family. In terms of assembly, homodimer.

The catalysed reaction is shikimate + NADP(+) = 3-dehydroshikimate + NADPH + H(+). Its pathway is metabolic intermediate biosynthesis; chorismate biosynthesis; chorismate from D-erythrose 4-phosphate and phosphoenolpyruvate: step 4/7. Its function is as follows. Involved in the biosynthesis of the chorismate, which leads to the biosynthesis of aromatic amino acids. Catalyzes the reversible NADPH linked reduction of 3-dehydroshikimate (DHSA) to yield shikimate (SA). In Ruthia magnifica subsp. Calyptogena magnifica, this protein is Shikimate dehydrogenase (NADP(+)).